A 187-amino-acid chain; its full sequence is Elongation factor P (187 aa).

Belongs to the elongation factor P family.

The protein localises to the cytoplasm. Its pathway is protein biosynthesis; polypeptide chain elongation. Functionally, involved in peptide bond synthesis. Stimulates efficient translation and peptide-bond synthesis on native or reconstituted 70S ribosomes in vitro. Probably functions indirectly by altering the affinity of the ribosome for aminoacyl-tRNA, thus increasing their reactivity as acceptors for peptidyl transferase. The polypeptide is Elongation factor P (Corynebacterium efficiens (strain DSM 44549 / YS-314 / AJ 12310 / JCM 11189 / NBRC 100395)).